A 545-amino-acid chain; its full sequence is MDLNEITSSSRPLANYHPNVWGDRFLLHEPEFTCQAGEKQLVEELKEEVRRELKEASNDYLRQLKMVDAIQRLGIEYLFEEEIDEALRNLLAKFENYCKDNHDMYATALSFRLLRQHGYKVSCEVFDKFKDGEDGFKVEEVMAVLELFEATHMRIHGEDVLDQAFVFTRNYLQSIHATLSNPIAKQVHNALNGYSCRRGMPRIEARKYIPIYEEYGCHHKALLKLAKLDFNLLQSMHKRELTQLYRWWKDLEMPTKLPYIRDRLVETYFWDMGFYFEPQYALARNILVKVQCLVSIFDDTFDAYGAFKELQLFKDAIDRWSISCLDELPEYMQIIYKLVLDVFEEIESHMIKQGTSYRLDYAREAIKIVIGGYFDEAKWREEEYKPRMEEYMKVATKSAAYLTLIIVSFVGMKNDIATPQAFQWVLSEPQIITASLALARLSNDLVGIEFEKERKYIATAVELYEEEHKVSKEEAVLELRHETESAWKEINEALLEPTTFATPILDRILNSARVLEVFYDKTDRYTHVDLELQNIIAQLYIHPIP.

Positions 298, 302, 443, and 451 each coordinate Mg(2+). Residues D298–D302 carry the DDXXD motif motif.

The protein belongs to the terpene synthase family. Mg(2+) is required as a cofactor.

Its subcellular location is the cytoplasm. It localises to the cytosol. The enzyme catalyses (2E,6E)-farnesyl diphosphate = (-)-germacrene D + diphosphate. It participates in secondary metabolite biosynthesis; terpenoid biosynthesis. In terms of biological role, sesquiterpene synthase involved in germacrene D biosynthesis. Also produces at least 13 additional sesquiterpene products, including germacrene C and (+)-germacrene A, beta-ylangene, (E)-beta-farnesene and (E,E)-alpha-farnesene. The chain is Germacrene D synthase 1 from Pogostemon cablin (Patchouli).